We begin with the raw amino-acid sequence, 75 residues long: Putative DNA-directed RNA polymerase subunit omega (75 aa).

It belongs to the RNA polymerase subunit omega family.

The protein localises to the plastid. It localises to the chloroplast. It catalyses the reaction RNA(n) + a ribonucleoside 5'-triphosphate = RNA(n+1) + diphosphate. Functionally, may be involved in RNA polymerase activity. This chain is Putative DNA-directed RNA polymerase subunit omega (rpoZ), found in Porphyra purpurea (Red seaweed).